A 314-amino-acid polypeptide reads, in one-letter code: Malate dehydrogenase (314 aa).

NAD(+) contacts are provided by residues 11–16 and Asp35; that span reads GSGNIG. 2 residues coordinate substrate: Arg84 and Arg90. NAD(+) contacts are provided by residues Asn97 and 120 to 122; that span reads ITN. Residues Asn122 and Arg153 each contribute to the substrate site. His177 serves as the catalytic Proton acceptor.

Belongs to the LDH/MDH superfamily. MDH type 3 family.

The enzyme catalyses (S)-malate + NAD(+) = oxaloacetate + NADH + H(+). Catalyzes the reversible oxidation of malate to oxaloacetate. The protein is Malate dehydrogenase of Rickettsia bellii (strain RML369-C).